Reading from the N-terminus, the 235-residue chain is Small ribosomal subunit protein uS3 (235 aa).

The KH type-2 domain maps to 39 to 107 (VRKFLNKELM…PAQINIAEVK (69 aa)).

Belongs to the universal ribosomal protein uS3 family. Part of the 30S ribosomal subunit. Forms a tight complex with proteins S10 and S14.

Binds the lower part of the 30S subunit head. Binds mRNA in the 70S ribosome, positioning it for translation. The sequence is that of Small ribosomal subunit protein uS3 from Actinobacillus succinogenes (strain ATCC 55618 / DSM 22257 / CCUG 43843 / 130Z).